Consider the following 320-residue polypeptide: Acetyl-coenzyme A carboxylase carboxyl transferase subunit alpha (320 aa).

The CoA carboxyltransferase C-terminal domain occupies 41–295; sequence RIEEKAGQAL…GDAIAQAFDE (255 aa).

This sequence belongs to the AccA family. As to quaternary structure, acetyl-CoA carboxylase is a heterohexamer composed of biotin carboxyl carrier protein (AccB), biotin carboxylase (AccC) and two subunits each of ACCase subunit alpha (AccA) and ACCase subunit beta (AccD).

It localises to the cytoplasm. It catalyses the reaction N(6)-carboxybiotinyl-L-lysyl-[protein] + acetyl-CoA = N(6)-biotinyl-L-lysyl-[protein] + malonyl-CoA. Its pathway is lipid metabolism; malonyl-CoA biosynthesis; malonyl-CoA from acetyl-CoA: step 1/1. In terms of biological role, component of the acetyl coenzyme A carboxylase (ACC) complex. First, biotin carboxylase catalyzes the carboxylation of biotin on its carrier protein (BCCP) and then the CO(2) group is transferred by the carboxyltransferase to acetyl-CoA to form malonyl-CoA. The sequence is that of Acetyl-coenzyme A carboxylase carboxyl transferase subunit alpha from Bradyrhizobium sp. (strain ORS 278).